An 883-amino-acid chain; its full sequence is Alanine--tRNA ligase (883 aa).

Zn(2+) contacts are provided by His565, His569, Cys675, and His679.

The protein belongs to the class-II aminoacyl-tRNA synthetase family. It depends on Zn(2+) as a cofactor.

The protein resides in the cytoplasm. It catalyses the reaction tRNA(Ala) + L-alanine + ATP = L-alanyl-tRNA(Ala) + AMP + diphosphate. Its function is as follows. Catalyzes the attachment of alanine to tRNA(Ala) in a two-step reaction: alanine is first activated by ATP to form Ala-AMP and then transferred to the acceptor end of tRNA(Ala). Also edits incorrectly charged Ser-tRNA(Ala) and Gly-tRNA(Ala) via its editing domain. This Rhodospirillum rubrum (strain ATCC 11170 / ATH 1.1.1 / DSM 467 / LMG 4362 / NCIMB 8255 / S1) protein is Alanine--tRNA ligase.